A 650-amino-acid chain; its full sequence is Rab proteins geranylgeranyltransferase component A 1 (650 aa).

Disordered regions lie at residues 156–208 (IPAE…ETPK) and 603–650 (PAPP…EPSE). The span at 177 to 190 (ATGKKENSDAKSST) shows a compositional bias: basic and acidic residues. Over residues 616–634 (DSSQQEVPESSVTPETNSE) the composition is skewed to polar residues.

Belongs to the Rab GDI family. As to quaternary structure, monomer. Heterotrimer composed of RABGGTA, RABGGTB and CHM; within this trimer, RABGGTA and RABGGTB form the catalytic component B, while CHM (component A) mediates Rab protein binding. Can associate with the Rab GGTase dimer (RGGT or component B) prior to Rab protein binding; the association is stabilized by geranylgeranyl pyrophosphate (GGpp). The CHM:RGGT:Rab complex is destabilized by GGpp. Interacts with RAB1A, RAB1B, RAB7A and RAB27A and mediates their prenylation. Interacts with RAB5A. Interacts with the non-phosphorylated forms of RAB3A, RAB3B, RAB3C, RAB3D, RAB5B, RAB5C RAB8A, RAB8B, RAB10, RAB12, RAB35, and RAB43. In terms of tissue distribution, most abundant in the heart, brain, and spleen. Lower levels seen in the lung, liver, muscle and kidney. Extremely low levels seen in the testis.

The protein resides in the cytoplasm. Its subcellular location is the cytosol. In terms of biological role, substrate-binding subunit of the Rab geranylgeranyltransferase (GGTase) complex. Binds unprenylated Rab proteins and presents the substrate peptide to the catalytic component B composed of RABGGTA and RABGGTB, and remains bound to it after the geranylgeranyl transfer reaction. The component A is thought to be regenerated by transferring its prenylated Rab back to the donor membrane. Besides, a pre-formed complex consisting of CHM and the Rab GGTase dimer (RGGT or component B) can bind to and prenylate Rab proteins; this alternative pathway is proposed to be the predominant pathway for Rab protein geranylgeranylation. The sequence is that of Rab proteins geranylgeranyltransferase component A 1 (Chm) from Rattus norvegicus (Rat).